The primary structure comprises 289 residues: Probable ABC transporter permease protein BRA0749/BS1330_II0742 (289 aa).

6 consecutive transmembrane segments (helical) span residues 9-29, 70-90, 99-119, 144-166, 213-233, and 260-280; these read FLIL…VVHL, VWTV…AIIL, VARV…AIVW, IQWL…LVTV, IAIV…WVMT, and EASA…VIYI. The 215-residue stretch at 65–279 folds into the ABC transmembrane type-1 domain; sequence LWRTAVWTVA…AILLVFTVIY (215 aa).

It belongs to the binding-protein-dependent transport system permease family. As to quaternary structure, the complex is composed of two ATP-binding proteins (BRA0745), two transmembrane proteins (BRA0749) and a solute-binding protein (BRA0748).

The protein resides in the cell inner membrane. Its function is as follows. Probably part of an ABC transporter complex. Probably responsible for the translocation of the substrate across the membrane. This is Probable ABC transporter permease protein BRA0749/BS1330_II0742 from Brucella suis biovar 1 (strain 1330).